We begin with the raw amino-acid sequence, 431 residues long: Enolase (431 aa).

A (2R)-2-phosphoglycerate-binding site is contributed by Gln-167. The active-site Proton donor is Glu-209. Mg(2+) is bound by residues Asp-246, Glu-290, and Asp-317. (2R)-2-phosphoglycerate contacts are provided by Lys-342, Arg-371, Ser-372, and Lys-393. The Proton acceptor role is filled by Lys-342.

It belongs to the enolase family. In terms of assembly, component of the RNA degradosome, a multiprotein complex involved in RNA processing and mRNA degradation. Mg(2+) serves as cofactor.

It localises to the cytoplasm. The protein resides in the secreted. Its subcellular location is the cell surface. It carries out the reaction (2R)-2-phosphoglycerate = phosphoenolpyruvate + H2O. It participates in carbohydrate degradation; glycolysis; pyruvate from D-glyceraldehyde 3-phosphate: step 4/5. Catalyzes the reversible conversion of 2-phosphoglycerate (2-PG) into phosphoenolpyruvate (PEP). It is essential for the degradation of carbohydrates via glycolysis. The chain is Enolase from Yersinia enterocolitica serotype O:8 / biotype 1B (strain NCTC 13174 / 8081).